The primary structure comprises 312 residues: Malate dehydrogenase (312 aa).

NAD(+)-binding positions include 7 to 13 (GAAGGIG) and D34. Residues R81 and R87 each contribute to the substrate site. NAD(+)-binding positions include N94 and 117–119 (ITN). Residues N119 and R153 each coordinate substrate. Residue H177 is the Proton acceptor of the active site. M227 lines the NAD(+) pocket.

The protein belongs to the LDH/MDH superfamily. MDH type 1 family. Homodimer.

The catalysed reaction is (S)-malate + NAD(+) = oxaloacetate + NADH + H(+). Catalyzes the reversible oxidation of malate to oxaloacetate. The polypeptide is Malate dehydrogenase (Escherichia coli (strain 55989 / EAEC)).